The primary structure comprises 463 residues: Glucagon-like peptide 1 receptor (463 aa).

The signal sequence occupies residues 1–21 (MASTPSLLRLALLLLGAVGRA). Topologically, residues 22-139 (GPRPQGTTVS…KRGERNFPEE (118 aa)) are extracellular. 3 disulfides stabilise this stretch: Cys-46/Cys-71, Cys-62/Cys-104, and Cys-85/Cys-126. Asn-63, Asn-82, and Asn-115 each carry an N-linked (GlcNAc...) asparagine glycan. The chain crosses the membrane as a helical span at residues 140-164 (QLLSLYIIYTVGYALSFSALVIASA). Residues 165 to 175 (ILVGFRHLHCT) lie on the Cytoplasmic side of the membrane. Residues 176–201 (RNYIHLNLFASFILRALSVFIKDAAL) form a helical membrane-spanning segment. The Extracellular segment spans residues 202–227 (KWMYSTAAQQHQWDGLLSYQDSLGCR). Cys-226 and Cys-296 are joined by a disulfide. The chain crosses the membrane as a helical span at residues 228–251 (LVFLLMQYCVAANYYWLLVEGVYL). Topologically, residues 252–265 (YTLLAFSVFSEQRI) are cytoplasmic. Residues 266–290 (FKLYLSIGWGVPLLFVIPWGIVKYL) form a helical membrane-spanning segment. Residues 291 to 305 (YEDEGCWTRNSNMNY) lie on the Extracellular side of the membrane. A helical transmembrane segment spans residues 306–328 (WLIIRLPILFAIGVNFLIFIRVI). Residues 329–348 (CIVVSKLKANLMCKTDIKCR) are Cytoplasmic-facing. Cys-341 carries the post-translational modification ADP-ribosylcysteine. Arg-348 is modified (ADP-ribosylarginine). The helical transmembrane segment at 349-370 (LAKSTLTLIPLLGTHEVIFAFV) threads the bilayer. Residues 352–355 (STLT) are important for allosteric inhibitor binding. The Extracellular portion of the chain corresponds to 371–383 (MDEHARGTLRFIK). A helical membrane pass occupies residues 384–404 (LFTELSFTSFQGLMVAILYCF). Residues 405-463 (VNNEVQMEFRKCWERWRLEHLNIQRDCSMKPLKCPTSSVSSGATVGSSVYAATCQSSYS) are Cytoplasmic-facing.

It belongs to the G-protein coupled receptor 2 family. In terms of assembly, may form homodimers and heterodimers with GIPR. N-glycosylation enhances cell surface expression and lengthens receptor half-life by preventing degradation in the ER. In terms of tissue distribution, detected in pancreatic islets (at protein level). Detected in pancreatic islets and lungs.

It localises to the cell membrane. In terms of biological role, G-protein coupled receptor for glucagon-like peptide 1 (GLP-1). Ligand binding triggers activation of a signaling cascade that leads to the activation of adenylyl cyclase and increased intracellular cAMP levels. Plays a role in regulating insulin secretion in response to GLP-1. This chain is Glucagon-like peptide 1 receptor (Glp1r), found in Mus musculus (Mouse).